The primary structure comprises 378 residues: Small RNA 2'-O-methyltransferase (378 aa).

Position 61 (D61) interacts with S-adenosyl-L-methionine. Positions 114, 117, 118, and 176 each coordinate Mg(2+).

This sequence belongs to the methyltransferase superfamily. HEN1 family. Mg(2+) serves as cofactor.

Its subcellular location is the cytoplasm. It catalyses the reaction small RNA 3'-end nucleotide + S-adenosyl-L-methionine = small RNA 3'-end 2'-O-methylnucleotide + S-adenosyl-L-homocysteine + H(+). In terms of biological role, methyltransferase that adds a 2'-O-methyl group at the 3'-end of small RNAs. The protein is Small RNA 2'-O-methyltransferase of Schizosaccharomyces pombe (strain 972 / ATCC 24843) (Fission yeast).